Reading from the N-terminus, the 237-residue chain is Phosphoribosylaminoimidazole-succinocarboxamide synthase (237 aa).

The protein belongs to the SAICAR synthetase family.

The enzyme catalyses 5-amino-1-(5-phospho-D-ribosyl)imidazole-4-carboxylate + L-aspartate + ATP = (2S)-2-[5-amino-1-(5-phospho-beta-D-ribosyl)imidazole-4-carboxamido]succinate + ADP + phosphate + 2 H(+). Its pathway is purine metabolism; IMP biosynthesis via de novo pathway; 5-amino-1-(5-phospho-D-ribosyl)imidazole-4-carboxamide from 5-amino-1-(5-phospho-D-ribosyl)imidazole-4-carboxylate: step 1/2. The sequence is that of Phosphoribosylaminoimidazole-succinocarboxamide synthase from Shigella dysenteriae serotype 1 (strain Sd197).